A 337-amino-acid chain; its full sequence is Vacuolar protein sorting-associated protein 26B-B (337 aa).

Residues 313–337 are disordered; sequence RFEGTSHPETRPQHSGAAALEQEHE.

Belongs to the VPS26 family. In terms of assembly, component of the heterotrimeric retromer cargo-selective complex (CSC) which is believed to associate with variable sorting nexins to form functionally distinct retromer complex variants.

The protein localises to the cytoplasm. The protein resides in the membrane. It is found in the endosome. Its function is as follows. Acts as a component of the retromer cargo-selective complex (CSC). The CSC is believed to be the core functional component of retromer or respective retromer complex variants acting to prevent missorting of selected transmembrane cargo proteins into the lysosomal degradation pathway. Retromer mediates retrograde transport of cargo proteins from endosomes to the trans-Golgi network (TGN). This is Vacuolar protein sorting-associated protein 26B-B (vps26b-b) from Xenopus laevis (African clawed frog).